Here is an 872-residue protein sequence, read N- to C-terminus: UPF0182 protein Noc_0961 (872 aa).

7 helical membrane passes run 8 to 28 (FLIL…AGFE), 56 to 76 (LVVF…NFWV), 109 to 129 (SLWI…WPLF), 159 to 179 (LFSF…FLLL), 207 to 227 (WHLS…FFLQ), 254 to 274 (PFIW…LLFI), and 282 to 302 (TLAV…FHFL).

The protein belongs to the UPF0182 family.

It localises to the cell membrane. This is UPF0182 protein Noc_0961 from Nitrosococcus oceani (strain ATCC 19707 / BCRC 17464 / JCM 30415 / NCIMB 11848 / C-107).